The following is a 95-amino-acid chain: UPF0358 protein BcerKBAB4_3775 (95 aa).

This sequence belongs to the UPF0358 family.

This chain is UPF0358 protein BcerKBAB4_3775, found in Bacillus mycoides (strain KBAB4) (Bacillus weihenstephanensis).